A 471-amino-acid polypeptide reads, in one-letter code: 3-isopropylmalate dehydratase large subunit (471 aa).

[4Fe-4S] cluster contacts are provided by cysteine 349, cysteine 409, and cysteine 412.

The protein belongs to the aconitase/IPM isomerase family. LeuC type 1 subfamily. In terms of assembly, heterodimer of LeuC and LeuD. Requires [4Fe-4S] cluster as cofactor.

The catalysed reaction is (2R,3S)-3-isopropylmalate = (2S)-2-isopropylmalate. The protein operates within amino-acid biosynthesis; L-leucine biosynthesis; L-leucine from 3-methyl-2-oxobutanoate: step 2/4. Catalyzes the isomerization between 2-isopropylmalate and 3-isopropylmalate, via the formation of 2-isopropylmaleate. In Aliivibrio salmonicida (strain LFI1238) (Vibrio salmonicida (strain LFI1238)), this protein is 3-isopropylmalate dehydratase large subunit.